Here is a 257-residue protein sequence, read N- to C-terminus: Snake venom serine protease CL5 (257 aa).

A signal peptide spans 1–18 (MVLIRVLANLLILQLSYA). Positions 19–24 (QRSSEL) are excised as a propeptide. The Peptidase S1 domain occupies 25-248 (VIGGDECNIN…HLDWIQSIIA (224 aa)). 5 disulfide bridges follow: C31-C162, C49-C65, C141-C209, C173-C188, and C199-C224. The active-site Charge relay system is H64. N-linked (GlcNAc...) asparagine glycans are attached at residues N78 and N102. D109 acts as the Charge relay system in catalysis. Residues N153 and N169 are each glycosylated (N-linked (GlcNAc...) asparagine). The active-site Charge relay system is S203. N-linked (GlcNAc...) asparagine glycosylation occurs at N250.

It belongs to the peptidase S1 family. Snake venom subfamily. As to quaternary structure, monomer. In terms of tissue distribution, expressed by the venom gland.

It is found in the secreted. Functionally, snake venom serine protease that may act in the hemostasis system of the prey. This chain is Snake venom serine protease CL5, found in Trimeresurus stejnegeri (Chinese green tree viper).